The primary structure comprises 397 residues: UDP-galactose translocator (397 aa).

A disordered region spans residues 1-21; it reads MAAVGSGGSNAAAGPGAVSAG. A run of 10 helical transmembrane segments spans residues 3–23, 37–57, 65–85, 97–117, 140–160, 169–189, 200–220, 238–258, 269–289, and 315–335; these read AVGS…AGSL, YISL…IRYA, FFAT…CLLL, LALF…KLAV, TFQV…VLML, WASL…QAGG, GAGL…GVYF, LGLF…GTAV, PAVW…AVVV, and LFGF…IGAV. Over residues 9 to 21 the composition is skewed to low complexity; it reads SNAAAGPGAVSAG. The tract at residues 355–397 is disordered; sequence ASASTSGPCTHQQPPGQPPPPKLSSHRADLSTEPFLPKSVLVK.

It belongs to the nucleotide-sugar transporter family. SLC35A subfamily. In terms of assembly, interacts with SLC35A3; the interaction is reduced in the presence of SLC35A4. Found in a complex with SLC35A3 and SLC35A4.

Its subcellular location is the golgi apparatus membrane. The enzyme catalyses UMP(out) + UDP-alpha-D-galactose(in) = UMP(in) + UDP-alpha-D-galactose(out). It catalyses the reaction UDP-N-acetyl-alpha-D-galactosamine(in) + UMP(out) = UDP-N-acetyl-alpha-D-galactosamine(out) + UMP(in). The catalysed reaction is UMP(out) + UDP-alpha-D-glucose(in) = UMP(in) + UDP-alpha-D-glucose(out). It carries out the reaction UMP(out) + UDP-N-acetyl-alpha-D-glucosamine(in) = UMP(in) + UDP-N-acetyl-alpha-D-glucosamine(out). The enzyme catalyses UDP-alpha-D-galactose(in) + AMP(out) = UDP-alpha-D-galactose(out) + AMP(in). It catalyses the reaction UDP-alpha-D-galactose(in) + CMP(out) = UDP-alpha-D-galactose(out) + CMP(in). The catalysed reaction is UDP-N-acetyl-alpha-D-galactosamine(out) + UDP-alpha-D-galactose(in) = UDP-N-acetyl-alpha-D-galactosamine(in) + UDP-alpha-D-galactose(out). It carries out the reaction UDP-N-acetyl-alpha-D-glucosamine(out) + UDP-alpha-D-galactose(in) = UDP-N-acetyl-alpha-D-glucosamine(in) + UDP-alpha-D-galactose(out). The enzyme catalyses UDP-alpha-D-galactose(in) + UDP-alpha-D-glucose(out) = UDP-alpha-D-galactose(out) + UDP-alpha-D-glucose(in). It catalyses the reaction UMP(out) + CMP(in) = UMP(in) + CMP(out). The catalysed reaction is UMP(out) + AMP(in) = UMP(in) + AMP(out). In terms of biological role, transports uridine diphosphate galactose (UDP-galactose) from the cytosol into the Golgi apparatus, functioning as an antiporter that exchanges UDP-galactose for UMP. It is also able to exchange UDP-galactose for AMP and CMP, and to transport UDP-N-acetylgalactosamine (UDP-GalNAc) and other nucleotide sugars. As a provider of UDP-galactose to galactosyltransferases present in the Golgi apparatus, it is necessary for globotriaosylceramide/globoside (Gb3Cer) synthesis from lactosylceramide. The polypeptide is UDP-galactose translocator (Canis lupus familiaris (Dog)).